Reading from the N-terminus, the 203-residue chain is Small ribosomal subunit protein uS4 (203 aa).

The S4 RNA-binding domain occupies 93–154 (CRFDNVVFRA…KSRNMDAVRN (62 aa)).

This sequence belongs to the universal ribosomal protein uS4 family. In terms of assembly, part of the 30S ribosomal subunit. Contacts protein S5. The interaction surface between S4 and S5 is involved in control of translational fidelity.

Its function is as follows. One of the primary rRNA binding proteins, it binds directly to 16S rRNA where it nucleates assembly of the body of the 30S subunit. Functionally, with S5 and S12 plays an important role in translational accuracy. In Chloroherpeton thalassium (strain ATCC 35110 / GB-78), this protein is Small ribosomal subunit protein uS4.